Reading from the N-terminus, the 988-residue chain is UPF0182 protein MAB_3498c (988 aa).

The next 7 helical transmembrane spans lie at 19-39 (LVAA…LVDT), 63-83 (LALF…GFGL), 114-134 (LFLI…AQSY), 176-196 (FIAA…FGGI), 211-231 (IQLI…YWLD), 260-280 (KLIL…ALVL), and 288-308 (IGLA…PLIV).

It belongs to the UPF0182 family.

The protein resides in the cell membrane. This is UPF0182 protein MAB_3498c from Mycobacteroides abscessus (strain ATCC 19977 / DSM 44196 / CCUG 20993 / CIP 104536 / JCM 13569 / NCTC 13031 / TMC 1543 / L948) (Mycobacterium abscessus).